Here is a 161-residue protein sequence, read N- to C-terminus: Efficient mitochondria targeting-associated protein 19 (161 aa).

The Cytoplasmic portion of the chain corresponds to 1-10; sequence MKLGHREQQF. One can recognise an EXPERA domain in the interval 7 to 159; the sequence is EQQFYLWYFI…PTFLIPLRLC (153 aa). The helical transmembrane segment at 11-31 threads the bilayer; the sequence is YLWYFIVHIPITIFIDSSVVI. Topologically, residues 32–61 are lumenal; the sequence is PAKWQLGIAQKVVSDHIAKQHDFLLSEKPE. A helical membrane pass occupies residues 62 to 82; the sequence is WLYWFVVLELVLQLPLFVYFV. Residues 83–101 lie on the Cytoplasmic side of the membrane; that stretch reads NKFWNSSELQVNTNSRLKK. The helical transmembrane segment at 102-122 threads the bilayer; that stretch reads WLRIYGWNASLTTLICIVVIF. Residues 123 to 141 lie on the Lumenal side of the membrane; it reads KRGYIPYDVLKTSLSMTQK. Residues 142-160 form a helical membrane-spanning segment; the sequence is CQLASVYLPTFLIPLRLCF. Val161 is a topological domain (cytoplasmic).

This sequence belongs to the TMEM97/sigma-2 receptor family.

Its subcellular location is the endoplasmic reticulum membrane. Its function is as follows. Part of an import route for newly synthesized mitochondrial proteins termed the ER-SURF pathway (ER surface-mediated protein targeting), which retrieves mitochondrial precursor proteins from the ER surface and reroutes them to mitochondria for efficient mitochondrial import. Acts as a quality control factor in the ER, promoting the proteolytic degradation of nonproductive and extramitochondrial precursor proteins in the ER membrane thus removing them from the ER surface. The polypeptide is Efficient mitochondria targeting-associated protein 19 (Saccharomyces cerevisiae (strain ATCC 204508 / S288c) (Baker's yeast)).